A 345-amino-acid chain; its full sequence is tRNA N6-adenosine threonylcarbamoyltransferase (345 aa).

Histidine 115 and histidine 119 together coordinate Fe cation. Residues 137 to 141, aspartate 170, glycine 183, aspartate 187, and asparagine 276 contribute to the substrate site; that span reads LVSGG. Aspartate 306 is a binding site for Fe cation.

This sequence belongs to the KAE1 / TsaD family. The cofactor is Fe(2+).

It is found in the cytoplasm. It carries out the reaction L-threonylcarbamoyladenylate + adenosine(37) in tRNA = N(6)-L-threonylcarbamoyladenosine(37) in tRNA + AMP + H(+). Functionally, required for the formation of a threonylcarbamoyl group on adenosine at position 37 (t(6)A37) in tRNAs that read codons beginning with adenine. Is involved in the transfer of the threonylcarbamoyl moiety of threonylcarbamoyl-AMP (TC-AMP) to the N6 group of A37, together with TsaE and TsaB. TsaD likely plays a direct catalytic role in this reaction. The sequence is that of tRNA N6-adenosine threonylcarbamoyltransferase from Pediococcus pentosaceus (strain ATCC 25745 / CCUG 21536 / LMG 10740 / 183-1w).